Here is a 263-residue protein sequence, read N- to C-terminus: Proliferating cell nuclear antigen (263 aa).

Residues 61–80 mediate DNA binding; it reads RCDRNLSMGMNLNNMAKMLR.

The protein belongs to the PCNA family. Homotrimer. Interacts with FEN1A. Interacts with POLL. Interacts with RAD/GEN1. Interacts with DJA7 and DJA8. In terms of tissue distribution, expressed in proliferating tissues. Expressed in roots and root apex. Expressed at low levels in young leaves. Not detected in mature leaves. Highly expressed in shoot apical meristem (SAM). Expressed in flag leaves and panicles.

The protein localises to the nucleus. Its function is as follows. This protein is an auxiliary protein of DNA polymerase delta and is involved in the control of eukaryotic DNA replication by increasing the polymerase's processibility during elongation of the leading strand. This Oryza sativa subsp. japonica (Rice) protein is Proliferating cell nuclear antigen.